A 483-amino-acid polypeptide reads, in one-letter code: Phloretin 2'-O-glucosyltransferase (483 aa).

H15 functions as the Proton acceptor in the catalytic mechanism. H15 provides a ligand contact to an anthocyanidin. Catalysis depends on D118, which acts as the Charge relay. Residues T140, A360, Q362, H377, W380, N381, S382, and E385 each contribute to the UDP-alpha-D-glucose site. A400 contributes to the an anthocyanidin binding site. UDP-alpha-D-glucose-binding residues include E401 and Q402.

The protein belongs to the UDP-glycosyltransferase family.

It carries out the reaction phloretin + UDP-alpha-D-glucose = phlorizin + UDP + H(+). Functionally, glycosyltransferase that possesses phloretin 2'-O-glycosyltransferase activity. Converts phloretin to phlorizin (phloretin 2'-O-glucoside), a potent antioxidant. Is specific for phloretin and does not possess glycosyltransferase activity toward caffeic acid, catechin, chlorogenic acid, 2-coumaric acid, 3-coumaric acid, 4-coumaric acid, cyanidin, 3,4-dihydroxyhydrocinnamic acid, epicatechin, 3-hydroxybenzoic acid, naringenin, 3,4-dihydroxybenzoic acid, quercetin and rutin. Can glycosylate phloretin in the presence of UDP-glucose, UDP-xylose and UDP-galactose. The polypeptide is Phloretin 2'-O-glucosyltransferase (Malus domestica (Apple)).